Consider the following 704-residue polypeptide: Elongation factor G (704 aa).

The tr-type G domain occupies Glu8–Asn290. GTP contacts are provided by residues Ala17–Thr24, Asp88–His92, and Asn142–Asp145.

This sequence belongs to the TRAFAC class translation factor GTPase superfamily. Classic translation factor GTPase family. EF-G/EF-2 subfamily.

The protein localises to the cytoplasm. Catalyzes the GTP-dependent ribosomal translocation step during translation elongation. During this step, the ribosome changes from the pre-translocational (PRE) to the post-translocational (POST) state as the newly formed A-site-bound peptidyl-tRNA and P-site-bound deacylated tRNA move to the P and E sites, respectively. Catalyzes the coordinated movement of the two tRNA molecules, the mRNA and conformational changes in the ribosome. This chain is Elongation factor G, found in Francisella tularensis subsp. mediasiatica (strain FSC147).